A 924-amino-acid polypeptide reads, in one-letter code: Lon protease homolog 3, mitochondrial (924 aa).

A mitochondrion-targeting transit peptide spans 1 to 63 (MMPKRFNTSG…PVQSLLLFRA (63 aa)). The Lon N-terminal domain maps to 112 to 325 (VIALPLPHKP…LTLELVKKQV (214 aa)). 447 to 454 (GPPGVGKT) contributes to the ATP binding site. Positions 738 to 922 (QTPVGVVMGL…EKIFDLAFNY (185 aa)) constitute a Lon proteolytic domain. Active-site residues include Ser-828 and Lys-871.

The protein belongs to the peptidase S16 family. In terms of assembly, homohexamer or homoheptamer. Organized in a ring with a central cavity.

It localises to the mitochondrion matrix. It catalyses the reaction Hydrolysis of proteins in presence of ATP.. Functionally, ATP-dependent serine protease that mediates the selective degradation of misfolded, unassembled or oxidatively damaged polypeptides as well as certain short-lived regulatory proteins in the mitochondrial matrix. May also have a chaperone function in the assembly of inner membrane protein complexes. Participates in the regulation of mitochondrial gene expression and in the maintenance of the integrity of the mitochondrial genome. Binds to mitochondrial DNA in a site-specific manner. This Arabidopsis thaliana (Mouse-ear cress) protein is Lon protease homolog 3, mitochondrial (LON3).